The following is a 1761-amino-acid chain: Nonribosomal peptide synthetase 6 (1761 aa).

Positions Glu63–Arg468 are adenylation. One can recognise a Carrier 1 domain in the interval Glu600–Ser675. An O-(pantetheine 4'-phosphoryl)serine modification is found at Ser636. The condensation 1 stretch occupies residues Val712–Asp1135. Carrier domains are found at residues Ser1169–Arg1242 and Ser1237–Met1313. 2 positions are modified to O-(pantetheine 4'-phosphoryl)serine: Ser1203 and Ser1274. The condensation 2 stretch occupies residues Ile1354 to Val1677.

This sequence belongs to the NRP synthetase family.

The protein operates within siderophore biosynthesis. NRPS involved in extracellular coprogen-type siderophores biosynthesis including coprogen, neocoprogen I and neocoprogen II. The role of extracellular siderophores in fungal virulence to plants is to supply iron to the fungus during plant infection, but not to act as phytotoxins, depriving their hosts of iron. This Cochliobolus miyabeanus (Brown spot disease fungus) protein is Nonribosomal peptide synthetase 6.